Here is a 411-residue protein sequence, read N- to C-terminus: MSVGCACPGCSSKSFKLYSPKEPPNGNAFPPFHPGTMLDRDVGPTPMYPPTYLEPGIGRHTPYGNQTDYRIFELNKRLQNWTEECDNLWWDAFTTEFFEDDAMLTITFCLEDGPKRYTIGRTLIPRYFRSIFEGGATELYYVLKHPKEAFHSNFVSLDCDQGSMVTQHGKPMFTQVCVEGRLYLEFMFDDMMRIKTWHFSIRQHRELIPRSILAMHAQDPQMLDQLSKNITRCGLSNSTLNYLRLCVILEPMQELMSRHKTYSLSPRDCLKTCLFQKWQRMVAPPAEPARQQPSKRRKRKMSGGSTMSSGGGNTNNSNSKKKSPASTFALSSQVPDVMVVGEPTLMGGEFGDEDERLITRLENTQFDAANGIDDEDSFNNSPALGANSPWNSKPPSSQESKSENPTSQASQ.

At Ser-2 the chain carries N-acetylserine. At Thr-61 the chain carries Phosphothreonine. Ser-265 and Ser-302 each carry phosphoserine. Disordered regions lie at residues 284 to 330 (PPAE…TFAL) and 367 to 411 (DAAN…QASQ). A compositionally biased stretch (low complexity) spans 302-318 (SGGSTMSSGGGNTNNSN). Residues 336-375 (DVMVVGEPTLMGGEFGDEDERLITRLENTQFDAANGIDDE) form the LIM interaction domain (LID) domain.

The protein belongs to the LDB family. Interacts with ESR1. Forms homodimers and heterodimers. Interacts with and activates LHX1/LIM1. Interacts with the LIM domains of ISL1 and LMO2. Can assemble in a complex with LMO2 and TAL1/SCL but does not interact with TAL1/SCL directly. Strongly interacts with the LIM2 domain of LMX1A and more weakly with the LIM1 domain. Homodimerization is not required for, and does not effect, LMX1A-binding. Component of a nuclear TAL-1 complex composed at least of CBFA2T3, LDB1, TAL1 and TCF3. Interacts with LHX6 and LHX9. At neuronal promoters, forms a complex with LHX3 involved in the specification of interneurons, in motor neurons, it is displaced by ISL1 to form a ternary complex in which ISL1 contacts both LHX3 and LDB1. Interacts with SLK; leading to negatively regulate SLK kinase activity. Interacts with YWHAZ. Interacts with PRDM1/BLIMP1. Interacts with LMO4. Interacts with RLIM/RNF12; the interaction inhibits the ubiquitination of LMO proteins. In terms of processing, ubiquitinated by RLIM/RNF12, leading to its degradation by the proteasome. In terms of tissue distribution, expressed in multiple adult tissues including heart, brain, liver, kidney, testis, lung and muscle, with expression highest in the pituitary gland and skin.

Its subcellular location is the nucleus. In terms of biological role, binds to the LIM domain of a wide variety of LIM domain-containing transcription factors. May regulate the transcriptional activity of LIM-containing proteins by determining specific partner interactions. Plays a role in the development of interneurons and motor neurons in cooperation with LHX3 and ISL1. Acts synergistically with LHX1/LIM1 in axis formation and activation of gene expression. Acts with LMO2 in the regulation of red blood cell development, maintaining erythroid precursors in an immature state. The polypeptide is LIM domain-binding protein 1 (Ldb1) (Mus musculus (Mouse)).